A 263-amino-acid chain; its full sequence is Protein PYRICULARIA ORYZAE RESISTANCE 21 (263 aa).

The 68-residue stretch at 1-68 (MGILVISVDL…IWCKAGKIIK (68 aa)) folds into the HMA domain. Residues Cys12 and Cys15 each contribute to the a metal cation site. Residues 126-153 (CEKPKPCEKPPPCKPEEPPKPPPEKPPP) form a disordered region. Positions 139–153 (KPEEPPKPPPEKPPP) are enriched in basic and acidic residues.

Its function is as follows. Involved in defense responses. Contributes to slowing defense responses toward Magnaporthe oryzae. The polypeptide is Protein PYRICULARIA ORYZAE RESISTANCE 21 (Oryza sativa subsp. indica (Rice)).